The chain runs to 793 residues: PC3-like endoprotease variant A (793 aa).

A signal peptide spans 1–29 (MNYRGIYRRRYVFVLLLLVAVVNISYGWT). A propeptide spanning residues 30–152 (VLKNKDYKRR…QQKILERVKR (123 aa)) is cleaved from the precursor. Asparagine 62 and asparagine 190 each carry an N-linked (GlcNAc...) asparagine glycan. The Peptidase S8 domain maps to 164 to 486 (MWYLLNTGQA…FGRLDANAMV (323 aa)). Residues aspartate 202 and histidine 242 each act as charge relay system in the active site. Cystine bridges form between cysteine 259-cysteine 411 and cysteine 351-cysteine 381. The Charge relay system role is filled by serine 419. The P/Homo B domain maps to 495-638 (LPAQRKCTAA…EERVIDTQTK (144 aa)). Cysteines 501 and 527 form a disulfide.

It belongs to the peptidase S8 family. Furin subfamily. In terms of tissue distribution, predominantly in the body column.

Functionally, probably involved in the processing of hormone and other protein precursors at sites comprised of pairs of basic amino acid residues. This is PC3-like endoprotease variant A from Hydra vulgaris (Hydra).